The sequence spans 86 residues: Exodeoxyribonuclease 7 small subunit (86 aa).

The disordered stretch occupies residues Met1–Ser26.

Belongs to the XseB family. Heterooligomer composed of large and small subunits.

It localises to the cytoplasm. The catalysed reaction is Exonucleolytic cleavage in either 5'- to 3'- or 3'- to 5'-direction to yield nucleoside 5'-phosphates.. Its function is as follows. Bidirectionally degrades single-stranded DNA into large acid-insoluble oligonucleotides, which are then degraded further into small acid-soluble oligonucleotides. In Helicobacter pylori (strain ATCC 700392 / 26695) (Campylobacter pylori), this protein is Exodeoxyribonuclease 7 small subunit.